Reading from the N-terminus, the 1224-residue chain is Probable serine/threonine-protein kinase DDB_G0292350 (1224 aa).

2 disordered regions span residues 57-98 and 252-284; these read MSGS…STQR and SSPSSSSSSIKTKNTTSTTTTTTTTKNLNDISN. Composition is skewed to low complexity over residues 58–74 and 83–95; these read SGSIQSDLSSSDNFTSS and SSSNTSNRNSDNS. Coiled coils occupy residues 352 to 381 and 540 to 569; these read LFKQQEKQHQQQQQQQQNQQDKEKFEKQNN and DVQLSTKLNDEEETIEKEEEDLNSVDEYLT. Disordered stretches follow at residues 693–784 and 815–836; these read QPIP…FVIT and FTNNNNNNNGGSTITTTTTNNI. The segment covering 743–768 has biased composition (low complexity); it reads NNNNNNNNNINNNNINNNNINNNKNG. The span at 772-784 shows a compositional bias: polar residues; that stretch reads GETPSPSSSFVIT. In terms of domain architecture, Protein kinase spans 935–1193; it reads FRDKIKLGTG…PEMLLHHTFL (259 aa). ATP is bound by residues 941–949 and Lys-964; that span reads LGTGAFGNV. Catalysis depends on Asp-1063, which acts as the Proton acceptor.

Belongs to the protein kinase superfamily. Ser/Thr protein kinase family. Requires Mg(2+) as cofactor.

The catalysed reaction is L-seryl-[protein] + ATP = O-phospho-L-seryl-[protein] + ADP + H(+). It carries out the reaction L-threonyl-[protein] + ATP = O-phospho-L-threonyl-[protein] + ADP + H(+). The sequence is that of Probable serine/threonine-protein kinase DDB_G0292350 from Dictyostelium discoideum (Social amoeba).